The sequence spans 161 residues: Nucleotide-binding protein Gbem_0619 (161 aa).

This sequence belongs to the YajQ family.

Nucleotide-binding protein. The chain is Nucleotide-binding protein Gbem_0619 from Citrifermentans bemidjiense (strain ATCC BAA-1014 / DSM 16622 / JCM 12645 / Bem) (Geobacter bemidjiensis).